A 379-amino-acid polypeptide reads, in one-letter code: Sulfate adenylyltransferase (379 aa).

Belongs to the sulfate adenylyltransferase family.

It catalyses the reaction sulfate + ATP + H(+) = adenosine 5'-phosphosulfate + diphosphate. It participates in sulfur metabolism; hydrogen sulfide biosynthesis; sulfite from sulfate: step 1/3. In Cenarchaeum symbiosum (strain A), this protein is Sulfate adenylyltransferase.